The sequence spans 181 residues: MAKLSDIYQEQVIDKLINQFSYKSRMQVPNIEKIILNMGVGQTVTDKKLLDNAVANLTAISGQKPIITKARKSIASFKIRHGYPIGCKVTLRGKRMWEFFDKLISIVIPRIRDFRGFSIKSFDGRGNYSIGVVEQIIFPEIDYDKIDRVRGMNITITTTANSNNEGYALLSALNFPFRKNK.

It belongs to the universal ribosomal protein uL5 family. As to quaternary structure, part of the 50S ribosomal subunit; part of the 5S rRNA/L5/L18/L25 subcomplex. Contacts the 5S rRNA and the P site tRNA. Forms a bridge to the 30S subunit in the 70S ribosome.

Functionally, this is one of the proteins that bind and probably mediate the attachment of the 5S RNA into the large ribosomal subunit, where it forms part of the central protuberance. In the 70S ribosome it contacts protein S13 of the 30S subunit (bridge B1b), connecting the 2 subunits; this bridge is implicated in subunit movement. Contacts the P site tRNA; the 5S rRNA and some of its associated proteins might help stabilize positioning of ribosome-bound tRNAs. The protein is Large ribosomal subunit protein uL5 of Baumannia cicadellinicola subsp. Homalodisca coagulata.